Reading from the N-terminus, the 420-residue chain is MASNTTVPVITPLAHPEGSKLDFGATVSGVDIENLTDRDFAILRTALFTHQVLVIKSQSHVSPRAQYELTQRFDPLAAPLYGHGNTDSGSVGSKSILHPDLKTIPHQPQVQVIGNGFVPTYEGLSNIQLRHPHHRTFHSTSIPASHDLTHTRFYRWHIDAALYGGVARAPPVVTTLLAVKVPQGRRQTCVYDDGTGDELDVPLGTTAFVSGYKMYDILSETQKAFARSTRVEYAPHPYVWMSSAKSRSTGLGLVSEGKEMPMEELPEIEEDRIQILPMCWRNPVTGKLALQVHPSAVRRLHLEDGTVVEDLKEVREIVYGLQRPGIAPGLVYAHDWEEGDLVIFHNRGTLHSVVGAFAESEVRLFRQCNIAGSEFPMGPEEEEKEEELVHAEQEEGVVEVTKQESLPELRMGAVEVGVAA.

His-157 and Asp-159 together coordinate Fe cation. The 2-oxoglutarate site is built by Thr-206 and Trp-336. Position 351 (His-351) interacts with Fe cation. A 2-oxoglutarate-binding site is contributed by Arg-366. Residue Arg-366 participates in substrate binding.

Belongs to the TfdA dioxygenase family. It depends on Fe(2+) as a cofactor.

Its subcellular location is the cytoplasm. The protein localises to the cytosol. It carries out the reaction xanthine + 2-oxoglutarate + O2 = urate + succinate + CO2. Alpha-ketoglutarate-dependent xanthine dioxygenase is a non-heme mononuclear Fe(2+) enzyme that decarboxylates alpha-ketoglutarate to succinate and CO(2) while hydroxylating xanthine to generate uric acid. Allows xanthine utilization as a nitrogen source. The sequence is that of Alpha-ketoglutarate-dependent xanthine dioxygenase xan-1 from Neurospora crassa (strain ATCC 24698 / 74-OR23-1A / CBS 708.71 / DSM 1257 / FGSC 987).